A 427-amino-acid polypeptide reads, in one-letter code: MNTPKSIPSGTCRDTPVLKERGQREVFCGLTGIIWLHRKMQDAFFLVIGSRTCAHLLQSAAGVMIFAEPRFGTAILEETDLAGMADAHEELDREVERLLSRRPDIKQLFLVGSCPSEVIKLDLARAAERLTQVHAPHVRVLNYSGSGIETTFTQGEDACLTSMVPVLPTTDQKELMLVGALPDVVEDQAVSLLSQMGIGPIRVLPAPRTAETPGVGPNTVFACLQPFLGDTAAALTRRGAHHIQAPFPFGEEGTTLWLRAIADEFGVDDDTFDRVTAAPRARARKAIANASEHLNGKSVFFMPDSQLEIPLARFLTRECGMEAIEIGQPFIHKGLVGPDLDLMPAGPTISEGQDVDKQLDRVRAAQPDLTVCGLGLANPLEAEGLTTKWAIELVFTPVHFYEQAGDLAGLFSRPVRRRAVLKLEAAE.

[4Fe-4S] cluster is bound by residues Cys28, Cys53, and Cys114.

Belongs to the BchN/ChlN family. Protochlorophyllide reductase is composed of three subunits; BchL, BchN and BchB. Forms a heterotetramer of two BchB and two BchN subunits. The cofactor is [4Fe-4S] cluster.

It catalyses the reaction chlorophyllide a + oxidized 2[4Fe-4S]-[ferredoxin] + 2 ADP + 2 phosphate = protochlorophyllide a + reduced 2[4Fe-4S]-[ferredoxin] + 2 ATP + 2 H2O. It participates in porphyrin-containing compound metabolism; bacteriochlorophyll biosynthesis (light-independent). Functionally, component of the dark-operative protochlorophyllide reductase (DPOR) that uses Mg-ATP and reduced ferredoxin to reduce ring D of protochlorophyllide (Pchlide) to form chlorophyllide a (Chlide). This reaction is light-independent. The NB-protein (BchN-BchB) is the catalytic component of the complex. The polypeptide is Light-independent protochlorophyllide reductase subunit N (Jannaschia sp. (strain CCS1)).